We begin with the raw amino-acid sequence, 521 residues long: GMP synthase [glutamine-hydrolyzing] (521 aa).

A Glutamine amidotransferase type-1 domain is found at 9–203 (KILILDFGSQ…ISGICQCEKN (195 aa)). Cysteine 86 (nucleophile) is an active-site residue. Catalysis depends on residues histidine 177 and glutamate 179. Positions 204 to 396 (WTTDNIIAKL…LSIPPHIIYR (193 aa)) constitute a GMPS ATP-PPase domain. 231-237 (SGGVDSL) is an ATP binding site.

Homodimer.

The enzyme catalyses XMP + L-glutamine + ATP + H2O = GMP + L-glutamate + AMP + diphosphate + 2 H(+). The protein operates within purine metabolism; GMP biosynthesis; GMP from XMP (L-Gln route): step 1/1. In terms of biological role, catalyzes the synthesis of GMP from XMP. The chain is GMP synthase [glutamine-hydrolyzing] from Ruthia magnifica subsp. Calyptogena magnifica.